Consider the following 105-residue polypeptide: Integration host factor subunit beta (105 aa).

Belongs to the bacterial histone-like protein family. Heterodimer of an alpha and a beta chain.

This protein is one of the two subunits of integration host factor, a specific DNA-binding protein that functions in genetic recombination as well as in transcriptional and translational control. This chain is Integration host factor subunit beta, found in Nitrosomonas europaea (strain ATCC 19718 / CIP 103999 / KCTC 2705 / NBRC 14298).